Reading from the N-terminus, the 347-residue chain is NADH-ubiquinone oxidoreductase chain 2 (347 aa).

Transmembrane regions (helical) follow at residues 3–23, 25–45, 59–79, 96–116, 148–170, 178–198, 200–220, 247–267, 276–296, and 326–346; these read PLIL…VMMS, HWLM…PLLM, YFLT…INLL, IIMT…FWVP, GINL…WGGL, ILAY…AFNP, MTLL…MLFM, IMLS…WMII, ITLA…YMRL, and LPML…ITLL.

The protein belongs to the complex I subunit 2 family. As to quaternary structure, core subunit of respiratory chain NADH dehydrogenase (Complex I) which is composed of 45 different subunits. Interacts with TMEM242.

Its subcellular location is the mitochondrion inner membrane. It catalyses the reaction a ubiquinone + NADH + 5 H(+)(in) = a ubiquinol + NAD(+) + 4 H(+)(out). In terms of biological role, core subunit of the mitochondrial membrane respiratory chain NADH dehydrogenase (Complex I) which catalyzes electron transfer from NADH through the respiratory chain, using ubiquinone as an electron acceptor. Essential for the catalytic activity and assembly of complex I. The protein is NADH-ubiquinone oxidoreductase chain 2 of Saccopteryx leptura (Lesser sac-winged bat).